Here is a 344-residue protein sequence, read N- to C-terminus: Dihydroorotase (344 aa).

Positions 14 and 16 each coordinate Zn(2+). Substrate contacts are provided by residues 16-18 (HLR) and Asn42. Zn(2+) is bound by residues Lys100, His137, and His175. At Lys100 the chain carries N6-carboxylysine. Position 137 (His137) interacts with substrate. Leu220 contacts substrate. Residue Asp248 coordinates Zn(2+). Asp248 is a catalytic residue. The substrate site is built by His252 and Ala264.

This sequence belongs to the metallo-dependent hydrolases superfamily. DHOase family. Class II DHOase subfamily. In terms of assembly, homodimer. The cofactor is Zn(2+).

It carries out the reaction (S)-dihydroorotate + H2O = N-carbamoyl-L-aspartate + H(+). It participates in pyrimidine metabolism; UMP biosynthesis via de novo pathway; (S)-dihydroorotate from bicarbonate: step 3/3. In terms of biological role, catalyzes the reversible cyclization of carbamoyl aspartate to dihydroorotate. The chain is Dihydroorotase from Cupriavidus taiwanensis (strain DSM 17343 / BCRC 17206 / CCUG 44338 / CIP 107171 / LMG 19424 / R1) (Ralstonia taiwanensis (strain LMG 19424)).